Here is a 701-residue protein sequence, read N- to C-terminus: Peptide transporter CstA (701 aa).

The Cytoplasmic portion of the chain corresponds to methionine 1–lysine 6. The helical transmembrane segment at tyrosine 7–asparagine 27 threads the bilayer. The Periplasmic segment spans residues arginine 28 to asparagine 33. The chain crosses the membrane as a helical span at residues alanine 34–leucine 54. Residues tyrosine 55–lysine 86 are Cytoplasmic-facing. The helical transmembrane segment at valine 87–leucine 107 threads the bilayer. At alanine 108–methionine 117 the chain is on the periplasmic side. Residues isoleucine 118–valine 138 traverse the membrane as a helical segment. Residues serine 139–glycine 160 are Cytoplasmic-facing. Residues valine 161 to isoleucine 181 form a helical membrane-spanning segment. At valine 182–serine 189 the chain is on the periplasmic side. A helical membrane pass occupies residues proline 190 to leucine 210. The Cytoplasmic portion of the chain corresponds to arginine 211–arginine 217. Residues isoleucine 218 to tryptophan 238 traverse the membrane as a helical segment. At valine 239–glutamine 255 the chain is on the periplasmic side. A helical membrane pass occupies residues leucine 256–leucine 276. Residues alanine 277–aspartate 280 lie on the Cytoplasmic side of the membrane. A helical membrane pass occupies residues tyrosine 281–methionine 301. The Periplasmic segment spans residues arginine 302 to asparagine 324. Residues leucine 325–isoleucine 345 traverse the membrane as a helical segment. The Cytoplasmic portion of the chain corresponds to serine 346 to serine 372. A helical membrane pass occupies residues phenylalanine 373 to methionine 393. Topologically, residues asparagine 394–serine 395 are periplasmic. A helical membrane pass occupies residues proline 396–valine 416. The Cytoplasmic portion of the chain corresponds to serine 417 to serine 439. A helical membrane pass occupies residues isoleucine 440–glycine 460. Over alanine 461 to glycine 463 the chain is Periplasmic. A helical transmembrane segment spans residues glycine 464 to leucine 484. The Cytoplasmic portion of the chain corresponds to threonine 485–alanine 523. The helical transmembrane segment at leucine 524–isoleucine 544 threads the bilayer. At asparagine 545–leucine 550 the chain is on the periplasmic side. The chain crosses the membrane as a helical span at residues phenylalanine 551–phenylalanine 571. The Cytoplasmic portion of the chain corresponds to lysine 572–arginine 577. A helical membrane pass occupies residues tyrosine 578–tryptophan 598. Topologically, residues glutamine 599–arginine 643 are periplasmic. Residues leucine 644–isoleucine 664 traverse the membrane as a helical segment. The Cytoplasmic portion of the chain corresponds to lysine 665–histidine 701.

Belongs to the peptide transporter carbon starvation (CstA) (TC 2.A.114) family.

It localises to the cell inner membrane. Involved in peptide utilization during carbon starvation. This Escherichia coli (strain K12) protein is Peptide transporter CstA.